The following is a 633-amino-acid chain: Kinesin-like motor protein 9 (633 aa).

One can recognise a Kinesin motor domain in the interval 1–392; the sequence is MIQIFLRVKK…MRYSANAREI (392 aa). 94–101 is an ATP binding site; sequence GVSGAGKT. Disordered regions lie at residues 393-423, 531-556, and 575-633; these read LPPP…TKAL, LEEE…SRKL, and KLWP…INEL. Over residues 398–423 the composition is skewed to polar residues; sequence NENSGSQSPSHSLLQKSKNTSSTKAL. Residues 417-541 adopt a coiled-coil conformation; the sequence is TSSTKALTSH…EEESIKESSA (125 aa). Polar residues predominate over residues 578 to 587; that stretch reads PQSTLIQAPN. A compositionally biased stretch (low complexity) spans 604–623; sequence VSPIKPLSPSRRPPLTSLYS. 3 positions are modified to phosphoserine: Ser-605, Ser-611, and Ser-613. A compositionally biased stretch (polar residues) spans 624–633; the sequence is GTTDIDINEL.

Belongs to the TRAFAC class myosin-kinesin ATPase superfamily. Kinesin family. Interacts with ase1. Phosphorylated by cdc2 and dephosphorylated by clp1. Dephosphorylation is required for the interaction with ase1.

Its subcellular location is the nucleus. The protein localises to the cytoplasm. The protein resides in the cytoskeleton. It is found in the microtubule organizing center. It localises to the spindle pole body. Functionally, kinesin-like motor protein involved in anaphase B spindle elongation. This Schizosaccharomyces pombe (strain 972 / ATCC 24843) (Fission yeast) protein is Kinesin-like motor protein 9 (klp9).